The chain runs to 60 residues: UPF0337 protein SACOL1680 (60 aa).

This sequence belongs to the UPF0337 (CsbD) family.

In Staphylococcus aureus (strain COL), this protein is UPF0337 protein SACOL1680.